The primary structure comprises 448 residues: Phosphoglucosamine mutase (448 aa).

Ser-100 serves as the catalytic Phosphoserine intermediate. The Mg(2+) site is built by Ser-100, Asp-240, Asp-242, and Asp-244. The residue at position 100 (Ser-100) is a Phosphoserine.

It belongs to the phosphohexose mutase family. Mg(2+) is required as a cofactor. Post-translationally, activated by phosphorylation.

The enzyme catalyses alpha-D-glucosamine 1-phosphate = D-glucosamine 6-phosphate. In terms of biological role, catalyzes the conversion of glucosamine-6-phosphate to glucosamine-1-phosphate. The chain is Phosphoglucosamine mutase from Geobacillus thermodenitrificans (strain NG80-2).